The primary structure comprises 375 residues: Aminomethyltransferase (375 aa).

The protein belongs to the GcvT family. The glycine cleavage system is composed of four proteins: P, T, L and H.

The catalysed reaction is N(6)-[(R)-S(8)-aminomethyldihydrolipoyl]-L-lysyl-[protein] + (6S)-5,6,7,8-tetrahydrofolate = N(6)-[(R)-dihydrolipoyl]-L-lysyl-[protein] + (6R)-5,10-methylene-5,6,7,8-tetrahydrofolate + NH4(+). The glycine cleavage system catalyzes the degradation of glycine. The polypeptide is Aminomethyltransferase (Cupriavidus taiwanensis (strain DSM 17343 / BCRC 17206 / CCUG 44338 / CIP 107171 / LMG 19424 / R1) (Ralstonia taiwanensis (strain LMG 19424))).